Here is a 123-residue protein sequence, read N- to C-terminus: Large ribosomal subunit protein bL12 (123 aa).

This sequence belongs to the bacterial ribosomal protein bL12 family. In terms of assembly, homodimer. Part of the ribosomal stalk of the 50S ribosomal subunit. Forms a multimeric L10(L12)X complex, where L10 forms an elongated spine to which 2 to 4 L12 dimers bind in a sequential fashion. Binds GTP-bound translation factors.

In terms of biological role, forms part of the ribosomal stalk which helps the ribosome interact with GTP-bound translation factors. Is thus essential for accurate translation. The protein is Large ribosomal subunit protein bL12 of Bartonella henselae (strain ATCC 49882 / DSM 28221 / CCUG 30454 / Houston 1) (Rochalimaea henselae).